Reading from the N-terminus, the 401-residue chain is ATP-dependent RNA helicase eIF4A (401 aa).

The Q motif motif lies at 28-56 (DNFDDMKLKGELLRGIYAYGFERPSAIQQ). Positions 59 to 229 (IMPIVTGRDC…KKFMRDPIRI (171 aa)) constitute a Helicase ATP-binding domain. 72–79 (AQSGTGKT) is an ATP binding site. Residues 177–180 (DEAD) carry the DEAD box motif. Positions 240–401 (GIRQFYINVE…EMPLNVADLI (162 aa)) constitute a Helicase C-terminal domain.

This sequence belongs to the DEAD box helicase family. eIF4A subfamily. In terms of assembly, component of the eIF4F complex, which composition varies with external and internal environmental conditions. It is composed of at least eIF4A, eIF4E and eIF4G.

It is found in the cytoplasm. The catalysed reaction is ATP + H2O = ADP + phosphate + H(+). Functionally, ATP-dependent RNA helicase which is a subunit of the eIF4F complex involved in cap recognition and is required for mRNA binding to ribosome. In the current model of translation initiation, eIF4A unwinds RNA secondary structures in the 5'-UTR of mRNAs which is necessary to allow efficient binding of the small ribosomal subunit, and subsequent scanning for the initiator codon. The polypeptide is ATP-dependent RNA helicase eIF4A (TIF1) (Cryptococcus neoformans var. neoformans serotype D (strain B-3501A) (Filobasidiella neoformans)).